Here is a 127-residue protein sequence, read N- to C-terminus: Aspartate 1-decarboxylase (127 aa).

S25 (schiff-base intermediate with substrate; via pyruvic acid) is an active-site residue. Pyruvic acid (Ser) is present on S25. T57 contacts substrate. The Proton donor role is filled by Y58. Position 73–75 (73–75 (GAA)) interacts with substrate.

It belongs to the PanD family. As to quaternary structure, heterooctamer of four alpha and four beta subunits. Pyruvate serves as cofactor. In terms of processing, is synthesized initially as an inactive proenzyme, which is activated by self-cleavage at a specific serine bond to produce a beta-subunit with a hydroxyl group at its C-terminus and an alpha-subunit with a pyruvoyl group at its N-terminus.

The protein localises to the cytoplasm. It carries out the reaction L-aspartate + H(+) = beta-alanine + CO2. It functions in the pathway cofactor biosynthesis; (R)-pantothenate biosynthesis; beta-alanine from L-aspartate: step 1/1. Catalyzes the pyruvoyl-dependent decarboxylation of aspartate to produce beta-alanine. The sequence is that of Aspartate 1-decarboxylase from Listeria monocytogenes serotype 4b (strain CLIP80459).